Here is a 77-residue protein sequence, read N- to C-terminus: Protein UL148C (77 aa).

Transmembrane regions (helical) follow at residues 10–30 and 35–55; these read VLYL…AVAV and IAWA…VGAA.

It localises to the host membrane. This Homo sapiens (Human) protein is Protein UL148C (UL148C).